Consider the following 640-residue polypeptide: Kelch-like protein 17 (640 aa).

The tract at residues 1 to 50 (MQPRGERPAGRTQSPEHSSPGPGPEAPPPPQPPAPEAERARPRQARPAAP) is disordered. Pro residues predominate over residues 21-35 (GPGPEAPPPPQPPAP). Residues 90 to 157 (CDIVLHVAAK…AYTAEIVVGE (68 aa)) enclose the BTB domain. One can recognise a BACK domain in the interval 192–294 (CLGIRGFADT…SRDFLLGHVD (103 aa)). Residues 287–639 (DFLLGHVDAE…SPTLSVSSTS (353 aa)) form an interaction with F-actin region. 6 Kelch repeats span residues 341–387 (VLFA…AVGN), 388–434 (RLYA…ALHG), 436–481 (LYAA…TLDG), 482–528 (NLYA…VLEG), 530–575 (LYVA…AMDG), and 576–622 (WLYA…VLEL). The interaction with PDZK1 stretch occupies residues 638-640 (TSL).

Interacts with F-actin; the interaction disrupts the F-actin structures and leads to marked changes of neuronal morphology. Component of a complex, composed of PDZK1, SYNGAP1, KLHL17 and NMDA receptors. Interacts directly with PDZK1 (via PDZ1 domain); the interaction is important for integrity of actin cytoskeleton structures in neurons. Interacts with DLG4 and SYNGAP1. Interacts (via kelch repeats) with GRIK2 (via C-terminus); the interaction targets GRIK2 for degradation via ubiquitin-proteasome pathway. Interacts with GRIK1. Interacts with (via BTB domain) CUL3; the interaction regulates surface GRIK2 expression.

Its subcellular location is the postsynaptic density. The protein resides in the synapse. Its pathway is protein modification; protein ubiquitination. Functionally, substrate-recognition component of some cullin-RING-based BCR (BTB-CUL3-RBX1) E3 ubiquitin-protein ligase complexes. The BCR(KLHL17) complex mediates the ubiquitination and subsequent degradation of GLUR6. May play a role in the actin-based neuronal function. In Mus musculus (Mouse), this protein is Kelch-like protein 17 (Klhl17).